The sequence spans 467 residues: 3-isopropylmalate dehydratase large subunit (467 aa).

Cys348, Cys409, and Cys412 together coordinate [4Fe-4S] cluster. Positions 423-448 (NERSISTSNRNFEGRQGKGSRTHLAS) are disordered.

The protein belongs to the aconitase/IPM isomerase family. LeuC type 1 subfamily. In terms of assembly, heterodimer of LeuC and LeuD. [4Fe-4S] cluster serves as cofactor.

The catalysed reaction is (2R,3S)-3-isopropylmalate = (2S)-2-isopropylmalate. It functions in the pathway amino-acid biosynthesis; L-leucine biosynthesis; L-leucine from 3-methyl-2-oxobutanoate: step 2/4. Functionally, catalyzes the isomerization between 2-isopropylmalate and 3-isopropylmalate, via the formation of 2-isopropylmaleate. This is 3-isopropylmalate dehydratase large subunit from Bifidobacterium longum (strain DJO10A).